Reading from the N-terminus, the 662-residue chain is Protein transport Sec1b (662 aa).

It belongs to the STXBP/unc-18/SEC1 family.

Its function is as follows. Involved in the vesicle trafficking. Binds syntaxins. The sequence is that of Protein transport Sec1b (SEC1B) from Arabidopsis thaliana (Mouse-ear cress).